Consider the following 367-residue polypeptide: GMP synthase [glutamine-hydrolyzing] subunit B (367 aa).

A GMPS ATP-PPase domain is found at 2-190; sequence FDPASFVKEI…LKLPKEISER (189 aa). An ATP-binding site is contributed by 29-35; the sequence is SGGVDST.

As to quaternary structure, heterodimer composed of a glutamine amidotransferase subunit (A) and a GMP-binding subunit (B).

The catalysed reaction is XMP + L-glutamine + ATP + H2O = GMP + L-glutamate + AMP + diphosphate + 2 H(+). It functions in the pathway purine metabolism; GMP biosynthesis; GMP from XMP (L-Gln route): step 1/1. Its function is as follows. Catalyzes the synthesis of GMP from XMP. This chain is GMP synthase [glutamine-hydrolyzing] subunit B, found in Saccharolobus islandicus (strain M.16.27) (Sulfolobus islandicus).